We begin with the raw amino-acid sequence, 244 residues long: Rho-related GTP-binding protein RhoE (244 aa).

Position 30–37 (30–37 (GDSQCGRT)) interacts with GTP. The short motif at 52–60 (YVPTVFENY) is the Effector region element. GTP contacts are provided by residues 77-81 (DTSGS) and 135-138 (CKSD). C241 is subject to Cysteine methyl ester. C241 carries the S-farnesyl cysteine lipid modification. A propeptide spans 242 to 244 (TVM) (removed in mature form).

Belongs to the small GTPase superfamily. Rho family. As to quaternary structure, binds ROCK1. Interacts with UBXD5.

Its subcellular location is the cell membrane. Functionally, binds GTP but lacks intrinsic GTPase activity and is resistant to Rho-specific GTPase-activating proteins. This Sus scrofa (Pig) protein is Rho-related GTP-binding protein RhoE (RND3).